Consider the following 246-residue polypeptide: Pyridoxine 5'-phosphate synthase (246 aa).

3-amino-2-oxopropyl phosphate contacts are provided by Asn-8 and Arg-19. His-44 serves as the catalytic Proton acceptor. Residues Arg-46 and His-51 each coordinate 1-deoxy-D-xylulose 5-phosphate. The active-site Proton acceptor is the Glu-76. 1-deoxy-D-xylulose 5-phosphate is bound at residue Thr-106. Residue His-198 is the Proton donor of the active site. Residues Asp-199 and 221 to 222 (GH) each bind 3-amino-2-oxopropyl phosphate.

Belongs to the PNP synthase family. In terms of assembly, homooctamer; tetramer of dimers.

It is found in the cytoplasm. The catalysed reaction is 3-amino-2-oxopropyl phosphate + 1-deoxy-D-xylulose 5-phosphate = pyridoxine 5'-phosphate + phosphate + 2 H2O + H(+). It functions in the pathway cofactor biosynthesis; pyridoxine 5'-phosphate biosynthesis; pyridoxine 5'-phosphate from D-erythrose 4-phosphate: step 5/5. Functionally, catalyzes the complicated ring closure reaction between the two acyclic compounds 1-deoxy-D-xylulose-5-phosphate (DXP) and 3-amino-2-oxopropyl phosphate (1-amino-acetone-3-phosphate or AAP) to form pyridoxine 5'-phosphate (PNP) and inorganic phosphate. The protein is Pyridoxine 5'-phosphate synthase of Mesorhizobium japonicum (strain LMG 29417 / CECT 9101 / MAFF 303099) (Mesorhizobium loti (strain MAFF 303099)).